Reading from the N-terminus, the 304-residue chain is Olfactory receptor 52A4 (304 aa).

At 1-32 the chain is on the extracellular side; the sequence is MALPITNGTLFMPFVLTFIGIPGFESVQCWIG. A glycan (N-linked (GlcNAc...) asparagine) is linked at N7. The chain crosses the membrane as a helical span at residues 33–53; that stretch reads IPFCATYVIALIGNSLLLIII. At 54-61 the chain is on the cytoplasmic side; it reads KSEPSLHE. The chain crosses the membrane as a helical span at residues 62-82; that stretch reads PMYIFLATLGATDISLSTSIV. Residues 83–103 are Extracellular-facing; that stretch reads PKMLDIFWFHLPEIYFDACLF. An intrachain disulfide couples C101 to C184. The chain crosses the membrane as a helical span at residues 104-124; the sequence is QMWLIHTFQGIESGVLLAMAL. The Cytoplasmic segment spans residues 125–146; that stretch reads DRCVAICYPLRRAIVFTRQLVT. Residues 147–167 form a helical membrane-spanning segment; it reads YIVVGVTLRPAILVIPCLLLI. At 168–203 the chain is on the extracellular side; that stretch reads KCHLKLYRTKLIYHTYCERVALVKLATEDVYINKVY. Residues 204–224 form a helical membrane-spanning segment; sequence GILGAFIVGGLDFIFITLSYI. Residues 225–255 lie on the Cytoplasmic side of the membrane; that stretch reads QIFITVFHLPLKEARLKVFNTCIPHIYVFFQ. The helical transmembrane segment at 256–276 threads the bilayer; it reads FYLLAFFFIFYSQIWILYPII. Residues 277–279 lie on the Extracellular side of the membrane; the sequence is CTY. Residues 280 to 300 form a helical membrane-spanning segment; the sequence is HLVQSLPTGPTIPQPLYLWVK. At 301–304 the chain is on the cytoplasmic side; it reads DQTH.

The protein belongs to the G-protein coupled receptor 1 family.

It is found in the cell membrane. Functionally, odorant receptor. This is Olfactory receptor 52A4 from Homo sapiens (Human).